The following is a 230-amino-acid chain: Sugar fermentation stimulation protein homolog (230 aa).

Belongs to the SfsA family.

The chain is Sugar fermentation stimulation protein homolog from Ruegeria pomeroyi (strain ATCC 700808 / DSM 15171 / DSS-3) (Silicibacter pomeroyi).